The primary structure comprises 1320 residues: Sal-like protein 3 (1320 aa).

Basic residues predominate over residues 1-11; it reads MSRRKQAKPQH. Residues 1-49 form a disordered region; it reads MSRRKQAKPQHLKSDEELPPQDGASEHGVPGDGAEDADSGSESRSGSEE. A compositionally biased stretch (low complexity) spans 40-49; that stretch reads GSESRSGSEE. A C2H2-type 1; atypical zinc finger spans residues 51–73; the sequence is SVCEKCCAEFFKWADFLQHKKTC. Disordered regions lie at residues 84–166 and 271–367; these read DDEP…AFSM and LSAG…NLPN. Positions 88-100 are enriched in pro residues; it reads APPSEDFPEPSPA. Position 109 is a phosphoserine (Ser109). The segment covering 121 to 131 has biased composition (basic and acidic residues); the sequence is SEVKAATKEAE. Positions 143–160 are enriched in pro residues; sequence PPGPSVPPPPPALPPQPE. Over residues 271–289 the composition is skewed to low complexity; it reads LSAGPATASAGSGSTLPAA. Residues 295 to 311 are compositionally biased toward polar residues; the sequence is HLSQPASGTSTPCSTSA. Low complexity-rich tracts occupy residues 323–342 and 355–367; these read STGP…GNAV and PGPL…NLPN. 2 consecutive C2H2-type zinc fingers follow at residues 427-449 and 455-477; these read HKCR…LRSH and FKCN…FQRH. The tract at residues 534-623 is disordered; it reads GLQLPPTVPG…RTGDAPVVGG (90 aa). The span at 543–554 shows a compositional bias: polar residues; the sequence is GTHNYTDSPSIT. Residues 555-568 show a composition bias toward low complexity; sequence PVSRSPQRPSPASS. Residues 569 to 583 show a composition bias toward polar residues; that stretch reads ECTSLSPGLNNTESG. C2H2-type zinc fingers lie at residues 692–714, 720–742, and 752–774; these read NQCV…YRTH, FKCK…FGVH, and HSCP…IRMH. Disordered stretches follow at residues 807 to 846 and 878 to 972; these read SSFD…PPSP and VENG…GHPG. A compositionally biased stretch (acidic residues) spans 809–823; sequence FDDDIDENSMEEDSE. 2 stretches are compositionally biased toward low complexity: residues 834 to 846 and 902 to 923; these read PLLS…PPSP and RSAG…PAHS. Position 932 is a phosphoserine (Ser932). 4 C2H2-type zinc fingers span residues 997 to 1019, 1025 to 1047, 1133 to 1155, and 1161 to 1183; these read TVCG…YRSH, FVCT…LLTH, HNCQ…ERTH, and FGCT…MGTH. At Ser1197 the chain carries Phosphoserine.

This sequence belongs to the sal C2H2-type zinc-finger protein family. In terms of tissue distribution, in adult brain, testis and kidney. In lower levels also in adult ovaries and embryonic stem cells. In embryo in developing neuroectoderm of brain, inner ear and spinal cord. Also weakly and transiently expressed in embryonic branchial arches, notochord, limb buds and heart.

Its subcellular location is the nucleus. Its function is as follows. Probable transcription factor. This chain is Sal-like protein 3 (Sall3), found in Mus musculus (Mouse).